The sequence spans 596 residues: Fumarate reductase (cytochrome) (596 aa).

The signal sequence occupies residues 1 to 25; sequence MKKMNLAVCIATLMGTAGLMGTAVA. 17 residues coordinate heme c: histidine 33, cysteine 39, cysteine 42, histidine 43, cysteine 61, cysteine 64, histidine 65, histidine 83, histidine 86, cysteine 93, cysteine 96, histidine 97, alanine 99, histidine 100, cysteine 107, cysteine 110, and histidine 111. Residues 143 to 596 are flavoprotein-like; the sequence is ALASAPHDTV…EEAAKYSKKN (454 aa). The FAD site is built by alanine 162, glutamate 181, asparagine 189, alanine 194, glycine 195, glycine 196, glycine 303, and aspartate 369. Glycine 195 contributes to the fumarate binding site. Glycine 195 serves as a coordination point for succinate. Tyrosine 386 contributes to the heme c binding site. Succinate contacts are provided by histidine 390, threonine 402, and glutamate 403. Fumarate is bound by residues threonine 402 and glutamate 403. The active-site Proton donor is arginine 427. Histidine 529 provides a ligand contact to fumarate. Histidine 529 is a binding site for succinate. FAD is bound by residues histidine 530 and glutamate 559. 2 residues coordinate fumarate: arginine 569 and glycine 572. Succinate contacts are provided by arginine 569 and glycine 572. Residues alanine 574 and isoleucine 575 each contribute to the FAD site.

The protein in the C-terminal section; belongs to the FAD-dependent oxidoreductase 2 family. FRD/SDH subfamily. In terms of assembly, monomer. The cofactor is FAD. Requires heme c as cofactor.

It is found in the periplasm. The enzyme catalyses 2 Fe(III)-[cytochrome c] + succinate = fumarate + 2 Fe(II)-[cytochrome c] + 2 H(+). Its activity is regulated as follows. Mesaconic acid is a competitive inhibitor of fumarate reduction. Functionally, flavocytochrome that catalyzes the reduction of fumarate to succinate. Is essential for fumarate respiration during anaerobic growth, acting as the terminal reductase. Receives electrons from the membrane-bound tetraheme c-type cytochrome CymA. Is essentially unidirectional, catalyzing only fumarate reduction. Cannot reduce nitrite, dimethylsulphoxide, trimethylamine-N-oxide (TMAO) or sulfite. In vitro, can use the artificial electron donor methyl viologen. This is Fumarate reductase (cytochrome) from Shewanella frigidimarina (strain NCIMB 400).